A 309-amino-acid polypeptide reads, in one-letter code: Porphobilinogen deaminase (309 aa).

Cys-241 is subject to S-(dipyrrolylmethanemethyl)cysteine.

It belongs to the HMBS family. Monomer. Requires dipyrromethane as cofactor.

It carries out the reaction 4 porphobilinogen + H2O = hydroxymethylbilane + 4 NH4(+). Its pathway is porphyrin-containing compound metabolism; protoporphyrin-IX biosynthesis; coproporphyrinogen-III from 5-aminolevulinate: step 2/4. In terms of biological role, tetrapolymerization of the monopyrrole PBG into the hydroxymethylbilane pre-uroporphyrinogen in several discrete steps. In Campylobacter concisus (strain 13826), this protein is Porphobilinogen deaminase.